The sequence spans 367 residues: Germination protease (367 aa).

The propeptide occupies 1 to 15; sequence MKEPLDLSKYAVRTD.

The protein belongs to the peptidase A25 family. In terms of assembly, homotetramer. Post-translationally, autoproteolytically processed. The inactive tetrameric zymogen termed p46 autoprocesses to a smaller form termed p41, which is active only during spore germination.

The enzyme catalyses Endopeptidase action with P4 Glu or Asp, P1 preferably Glu &gt; Asp, P1' hydrophobic and P2' Ala.. Initiates the rapid degradation of small, acid-soluble proteins during spore germination. The protein is Germination protease of Bacillus cytotoxicus (strain DSM 22905 / CIP 110041 / 391-98 / NVH 391-98).